We begin with the raw amino-acid sequence, 454 residues long: L-serine dehydratase 1 (454 aa).

This sequence belongs to the iron-sulfur dependent L-serine dehydratase family. The cofactor is [4Fe-4S] cluster. Activated by post-translational modification by a system involving at least three gene products. Activation is mimicked in vitro by iron and dithiothreitol. There is considerable evidence for a free-radical activation mechanism.

It catalyses the reaction L-serine = pyruvate + NH4(+). Its pathway is carbohydrate biosynthesis; gluconeogenesis. Functionally, also deaminates threonine, particularly when it is present in high concentration. The protein is L-serine dehydratase 1 (sdaA) of Escherichia coli (strain K12).